The chain runs to 181 residues: UPF0301 protein MXAN_2022 (181 aa).

It belongs to the UPF0301 (AlgH) family.

The chain is UPF0301 protein MXAN_2022 from Myxococcus xanthus (strain DK1622).